The primary structure comprises 517 residues: MAQPVHSLCSAFGLQCCLLFLLASWGAGATTFQEYQKTGELSTSDHIFPLTPGLVYSIPFDHIVLHSGQRPPELPKSTEIHEQKRHCNTTRHSKPTDKPTGNSKTIDHKSSTDNHEAPPTSEENSSNQGKDPMIRNQRSVDPADSTTTHKESAGKKHITPAPKSKINCRKSTTGKSTVTRKSDKTGRPLEKSMSTLDKTSTSSHKTTTSFHNSGNSQTKQKSTSFPEKITAASKTTYKTTGTPEESEKTEDSRTTVASDKLLTKTTKNIQETISANELTQSLAEPTEHGGRTANENNTPSPAEPTENRERTANENKKTICTKGKNTPVPEKPTENLGNTTLTTETIKAPVKSTENPEKTAAVTKTIKPSVKVTGDKSLTTTSSHLNKTEVTHQVPTGSFTLITSRTKLSSITSEATGNESHPYLNKDGSQKGIHAGQMGENDSFPAWAIVIVVLVAVILLLVFLGLIFLVSYMMRTRRTLTQNTQYNDAEDEGGPNSYPVYLMEQQNLGMGQIPSPR.

The N-terminal stretch at 1–29 is a signal peptide; the sequence is MAQPVHSLCSAFGLQCCLLFLLASWGAGA. At 30 to 448 the chain is on the extracellular side; it reads TTFQEYQKTG…GENDSFPAWA (419 aa). Residues 67-341 are disordered; that stretch reads SGQRPPELPK…PTENLGNTTL (275 aa). Positions 83–93 are enriched in basic residues; the sequence is QKRHCNTTRHS. N-linked (GlcNAc...) asparagine glycosylation is present at Asn-88. Over residues 105-116 the composition is skewed to basic and acidic residues; that stretch reads TIDHKSSTDNHE. An N-linked (GlcNAc...) asparagine glycan is attached at Asn-124. Residues 169–179 show a composition bias toward polar residues; the sequence is RKSTTGKSTVT. Residues 180–190 are compositionally biased toward basic and acidic residues; the sequence is RKSDKTGRPLE. Residues 194 to 213 are compositionally biased toward low complexity; the sequence is STLDKTSTSSHKTTTSFHNS. Composition is skewed to polar residues over residues 214–225, 232–243, and 263–283; these read GNSQTKQKSTSF, ASKTTYKTTGTP, and TKTT…QSLA. A compositionally biased stretch (basic and acidic residues) spans 305–317; sequence TENRERTANENKK. Asn-338 is a glycosylation site (N-linked (GlcNAc...) asparagine). A helical transmembrane segment spans residues 449–469; it reads IVIVVLVAVILLLVFLGLIFL. Residues 470–517 are Cytoplasmic-facing; that stretch reads VSYMMRTRRTLTQNTQYNDAEDEGGPNSYPVYLMEQQNLGMGQIPSPR.

In terms of tissue distribution, detected in lung, esophagus, stomach, rectum, skin, cervix, testis, kidney, uterus and small intestine. Expressed in pancreas (at protein level).

The protein resides in the cell membrane. It is found in the cytoplasm. Its function is as follows. May modulate NF-kappaB signaling and play a role in cell growth. The polypeptide is Mucin-like protein 3 (Homo sapiens (Human)).